We begin with the raw amino-acid sequence, 155 residues long: Peptide deformylase 2 (155 aa).

Fe cation contacts are provided by cysteine 90 and histidine 132. The active site involves glutamate 133. A Fe cation-binding site is contributed by histidine 136.

It belongs to the polypeptide deformylase family. Fe(2+) is required as a cofactor.

It carries out the reaction N-terminal N-formyl-L-methionyl-[peptide] + H2O = N-terminal L-methionyl-[peptide] + formate. Its function is as follows. Removes the formyl group from the N-terminal Met of newly synthesized proteins. Requires at least a dipeptide for an efficient rate of reaction. N-terminal L-methionine is a prerequisite for activity but the enzyme has broad specificity at other positions. The sequence is that of Peptide deformylase 2 from Clostridium perfringens (strain 13 / Type A).